The following is a 404-amino-acid chain: Proteasomal ubiquitin receptor ADRM1-A (404 aa).

In terms of domain architecture, Pru spans 17 to 130; that stretch reads SSSKYLVEFR…RKLNEYLNNP (114 aa). The segment covering 195–247 has biased composition (low complexity); the sequence is GSGGPTTSSSSSSSRSQSAAVTPSSTTSSTRTTSAPVAPAAAPATTPSPAVSS. Disordered stretches follow at residues 195–258 and 376–404; these read GSGG…TSPT and FAKAMQSTSSQKERESSEKKEEEEDMSLD. A compositionally biased stretch (polar residues) spans 248-258; sequence NDGASEATSPT. Positions 278 to 390 constitute a DEUBAD domain; sequence TGEGGQQVDL…QSTSSQKERE (113 aa). Positions 386–395 are enriched in basic and acidic residues; the sequence is QKERESSEKK.

It belongs to the ADRM1 family. Component of the 19S proteasome regulatory particle complex. The 26S proteasome consists of a 20S core particle (CP) and two 19S regulatory subunits (RP).

It localises to the cytoplasm. The protein resides in the nucleus. In terms of biological role, component of the 26S proteasome, a multiprotein complex involved in the ATP-dependent degradation of ubiquitinated proteins. This complex plays a key role in the maintenance of protein homeostasis by removing misfolded or damaged proteins, which could impair cellular functions, and by removing proteins whose functions are no longer required. Therefore, the proteasome participates in numerous cellular processes, including cell cycle progression, apoptosis, or DNA damage repair. Within the complex, functions as a proteasomal ubiquitin receptor. In Xenopus laevis (African clawed frog), this protein is Proteasomal ubiquitin receptor ADRM1-A (adrm1-a).